Reading from the N-terminus, the 509-residue chain is ATP synthase subunit alpha (509 aa).

Position 169–176 (169–176) interacts with ATP; it reads GDRQTGKT.

The protein belongs to the ATPase alpha/beta chains family. F-type ATPases have 2 components, CF(1) - the catalytic core - and CF(0) - the membrane proton channel. CF(1) has five subunits: alpha(3), beta(3), gamma(1), delta(1), epsilon(1). CF(0) has three main subunits: a(1), b(2) and c(9-12). The alpha and beta chains form an alternating ring which encloses part of the gamma chain. CF(1) is attached to CF(0) by a central stalk formed by the gamma and epsilon chains, while a peripheral stalk is formed by the delta and b chains.

Its subcellular location is the cell inner membrane. It carries out the reaction ATP + H2O + 4 H(+)(in) = ADP + phosphate + 5 H(+)(out). Its function is as follows. Produces ATP from ADP in the presence of a proton gradient across the membrane. The alpha chain is a regulatory subunit. This Methylobacterium nodulans (strain LMG 21967 / CNCM I-2342 / ORS 2060) protein is ATP synthase subunit alpha.